We begin with the raw amino-acid sequence, 228 residues long: L-ribulose-5-phosphate 4-epimerase UlaF (228 aa).

Substrate-binding positions include 26 to 27 (GN), 43 to 44 (SG), and 72 to 73 (SS). Aspartate 74, histidine 93, and histidine 95 together coordinate Zn(2+). Catalysis depends on aspartate 118, which acts as the Proton donor/acceptor. Histidine 167 contacts Zn(2+). The active-site Proton donor/acceptor is the tyrosine 225.

The protein belongs to the aldolase class II family. AraD/FucA subfamily. Requires Zn(2+) as cofactor.

The enzyme catalyses L-ribulose 5-phosphate = D-xylulose 5-phosphate. It participates in cofactor degradation; L-ascorbate degradation; D-xylulose 5-phosphate from L-ascorbate: step 4/4. In terms of biological role, catalyzes the isomerization of L-ribulose 5-phosphate to D-xylulose 5-phosphate. Is involved in the anaerobic L-ascorbate utilization. The polypeptide is L-ribulose-5-phosphate 4-epimerase UlaF (Escherichia coli (strain SE11)).